Consider the following 147-residue polypeptide: MSIRLENLSYTPGARKEKHRKGRGHAAGKGKQAGRGQSGQKKRSTVRLGFEGGQNPWFRRVPKRGFRNFNKKEYEIFNLSDLESRYQYGDTVSLESLYLKKVLKKRNLKAKLLAKGDLTKKLTVTTNAFSIAAQKKIEEKGGKIEVR.

Residues 1–46 (MSIRLENLSYTPGARKEKHRKGRGHAAGKGKQAGRGQSGQKKRSTV) form a disordered region. Positions 16-28 (KEKHRKGRGHAAG) are enriched in basic residues.

Belongs to the universal ribosomal protein uL15 family. In terms of assembly, part of the 50S ribosomal subunit.

Functionally, binds to the 23S rRNA. This chain is Large ribosomal subunit protein uL15, found in Mesomycoplasma hyopneumoniae (strain 7448) (Mycoplasma hyopneumoniae).